A 556-amino-acid chain; its full sequence is Urocanate hydratase (556 aa).

Residues 52 to 53 (GG), Q130, 176 to 178 (GMG), E196, R201, 242 to 243 (NA), 263 to 267 (QTSAH), 273 to 274 (YL), and Y322 contribute to the NAD(+) site. C410 is an active-site residue. G492 serves as a coordination point for NAD(+).

Belongs to the urocanase family. NAD(+) is required as a cofactor.

The protein resides in the cytoplasm. It catalyses the reaction 4-imidazolone-5-propanoate = trans-urocanate + H2O. Its pathway is amino-acid degradation; L-histidine degradation into L-glutamate; N-formimidoyl-L-glutamate from L-histidine: step 2/3. In terms of biological role, catalyzes the conversion of urocanate to 4-imidazolone-5-propionate. The chain is Urocanate hydratase from Shewanella sp. (strain MR-7).